The chain runs to 183 residues: Adenine phosphoribosyltransferase (183 aa).

Belongs to the purine/pyrimidine phosphoribosyltransferase family. Homodimer.

The protein localises to the cytoplasm. The catalysed reaction is AMP + diphosphate = 5-phospho-alpha-D-ribose 1-diphosphate + adenine. It participates in purine metabolism; AMP biosynthesis via salvage pathway; AMP from adenine: step 1/1. Its function is as follows. Catalyzes a salvage reaction resulting in the formation of AMP, that is energically less costly than de novo synthesis. This is Adenine phosphoribosyltransferase from Edwardsiella ictaluri (strain 93-146).